Reading from the N-terminus, the 444-residue chain is Argininosuccinate synthase (444 aa).

Residues 18–26 (AFSGGLDTS) and alanine 44 each bind ATP. Tyrosine 100 provides a ligand contact to L-citrulline. Glycine 130 and threonine 132 together coordinate ATP. Residues threonine 132, asparagine 136, and aspartate 137 each coordinate L-aspartate. Asparagine 136 is an L-citrulline binding site. Aspartate 137 is an ATP binding site. L-citrulline-binding residues include arginine 140 and serine 193. Residue aspartate 195 participates in ATP binding. L-citrulline is bound by residues threonine 202, glutamate 204, and glutamate 281.

This sequence belongs to the argininosuccinate synthase family. Type 2 subfamily. Homotetramer.

The protein resides in the cytoplasm. It carries out the reaction L-citrulline + L-aspartate + ATP = 2-(N(omega)-L-arginino)succinate + AMP + diphosphate + H(+). The protein operates within amino-acid biosynthesis; L-arginine biosynthesis; L-arginine from L-ornithine and carbamoyl phosphate: step 2/3. In Mannheimia succiniciproducens (strain KCTC 0769BP / MBEL55E), this protein is Argininosuccinate synthase.